Reading from the N-terminus, the 1188-residue chain is Zinc finger SWIM domain-containing protein 5 (1188 aa).

Over residues 1–10 (MAEGGEREEL) the composition is skewed to basic and acidic residues. Disordered stretches follow at residues 1 to 46 (MAEG…GAGG) and 123 to 171 (AGAA…TGTA). Low complexity-rich tracts occupy residues 126–136 (AAGAAGASPVE) and 146–155 (AAPAGSAPGA). Over residues 156-171 (AGAGSSPGLGAGTGTA) the composition is skewed to gly residues. The segment at 222-259 (YKVAISFDRCKITSVSCGCGNKDIFYCAHVVALSLYRI) adopts an SWIM-type zinc-finger fold.

The polypeptide is Zinc finger SWIM domain-containing protein 5 (Zswim5) (Mus musculus (Mouse)).